The chain runs to 301 residues: uncharacterized protein (301 aa).

Residues Ser44 and Tyr107 each act as charge relay system in the active site. Catalysis depends on Tyr133, which acts as the Proton donor. Lys162 serves as the catalytic Schiff-base intermediate with substrate.

The protein belongs to the DapA family. In terms of assembly, homotetramer.

It is found in the cytoplasm. This is an uncharacterized protein from Pyrobaculum arsenaticum (strain DSM 13514 / JCM 11321 / PZ6).